The chain runs to 333 residues: GTPase Obg (333 aa).

Residues 1–158 (MFIDSAKIYV…RNIDLELKLL (158 aa)) form the Obg domain. Residues 121-143 (HGGKGNQHFATPTNRAPRYSEPA) form a disordered region. One can recognise an OBG-type G domain in the interval 159-323 (ADIGLVGFPN…LKDVLWRIIQ (165 aa)). GTP-binding positions include 165–172 (GFPNAGKS), 190–194 (FTTLE), 212–215 (DIPG), 279–282 (SKMD), and 304–306 (SSV). Mg(2+)-binding residues include Ser-172 and Thr-192.

The protein belongs to the TRAFAC class OBG-HflX-like GTPase superfamily. OBG GTPase family. Monomer. Mg(2+) is required as a cofactor.

The protein resides in the cytoplasm. Its function is as follows. An essential GTPase which binds GTP, GDP and possibly (p)ppGpp with moderate affinity, with high nucleotide exchange rates and a fairly low GTP hydrolysis rate. Plays a role in control of the cell cycle, stress response, ribosome biogenesis and in those bacteria that undergo differentiation, in morphogenesis control. The protein is GTPase Obg of Chloroherpeton thalassium (strain ATCC 35110 / GB-78).